A 285-amino-acid polypeptide reads, in one-letter code: Probable endonuclease 4 (285 aa).

Residues H68, H108, E145, D179, H182, H216, D229, H231, and E261 each contribute to the Zn(2+) site.

This sequence belongs to the AP endonuclease 2 family. Zn(2+) is required as a cofactor.

It carries out the reaction Endonucleolytic cleavage to 5'-phosphooligonucleotide end-products.. In terms of biological role, endonuclease IV plays a role in DNA repair. It cleaves phosphodiester bonds at apurinic or apyrimidinic (AP) sites, generating a 3'-hydroxyl group and a 5'-terminal sugar phosphate. This Geotalea daltonii (strain DSM 22248 / JCM 15807 / FRC-32) (Geobacter daltonii) protein is Probable endonuclease 4.